The following is a 314-amino-acid chain: Porphobilinogen deaminase (314 aa).

Cysteine 249 carries the S-(dipyrrolylmethanemethyl)cysteine modification.

This sequence belongs to the HMBS family. As to quaternary structure, monomer. Dipyrromethane serves as cofactor.

The catalysed reaction is 4 porphobilinogen + H2O = hydroxymethylbilane + 4 NH4(+). The protein operates within porphyrin-containing compound metabolism; protoporphyrin-IX biosynthesis; coproporphyrinogen-III from 5-aminolevulinate: step 2/4. In terms of biological role, tetrapolymerization of the monopyrrole PBG into the hydroxymethylbilane pre-uroporphyrinogen in several discrete steps. The sequence is that of Porphobilinogen deaminase from Brucella abortus (strain S19).